The chain runs to 449 residues: Required for meiotic nuclear division protein 1 homolog (449 aa).

The transit peptide at 1-12 (MPATLLRAVARS) directs the protein to the mitochondrion.

The protein belongs to the RMD1/sif2 family. Homooligomer.

The protein resides in the mitochondrion. Required for mitochondrial translation, possibly by coordinating the assembly or maintenance of the mitochondrial ribosome. The sequence is that of Required for meiotic nuclear division protein 1 homolog (RMND1) from Homo sapiens (Human).